The following is a 223-amino-acid chain: GrpE protein homolog, mitochondrial (223 aa).

This sequence belongs to the GrpE family. In terms of assembly, component of the PAM complex, at least composed of mtHsp70, mge1, tim44, pam16, pam17 and pam18.

It localises to the mitochondrion matrix. Its function is as follows. Essential component of the PAM complex, a complex required for the translocation of transit peptide-containing proteins from the inner membrane into the mitochondrial matrix in an ATP-dependent manner. Seems to control the nucleotide-dependent binding of ssc1 to substrate proteins. This is GrpE protein homolog, mitochondrial (mge1) from Schizosaccharomyces pombe (strain 972 / ATCC 24843) (Fission yeast).